A 236-amino-acid polypeptide reads, in one-letter code: uncharacterized protein (236 aa).

Disordered regions lie at residues 1–48, 67–122, and 134–192; these read MHLR…RTFS, VHTP…HSPR, and KLHP…PNNT. Basic residues predominate over residues 85–99; it reads RAHRTAKHPARRQSC. Positions 180 to 189 are enriched in pro residues; it reads PSPAIKPSPP.

This is an uncharacterized protein from Encephalitozoon cuniculi (strain GB-M1) (Microsporidian parasite).